Here is a 253-residue protein sequence, read N- to C-terminus: Diphthine synthase (253 aa).

Residues Asp-83, Leu-86, 111–112 (SI), Leu-163, and Leu-205 contribute to the S-adenosyl-L-methionine site.

It belongs to the diphthine synthase family. Homodimer.

It carries out the reaction 2-[(3S)-amino-3-carboxypropyl]-L-histidyl-[translation elongation factor 2] + 3 S-adenosyl-L-methionine = diphthine-[translation elongation factor 2] + 3 S-adenosyl-L-homocysteine + 3 H(+). It participates in protein modification; peptidyl-diphthamide biosynthesis. Functionally, S-adenosyl-L-methionine-dependent methyltransferase that catalyzes the trimethylation of the amino group of the modified target histidine residue in translation elongation factor 2 (EF-2), to form an intermediate called diphthine. The three successive methylation reactions represent the second step of diphthamide biosynthesis. In Pyrobaculum neutrophilum (strain DSM 2338 / JCM 9278 / NBRC 100436 / V24Sta) (Thermoproteus neutrophilus), this protein is Diphthine synthase.